The primary structure comprises 406 residues: Putative cyclin-F3-2 (406 aa).

A disordered region spans residues 1-107 (MARPRTRSVA…PGAAGGPWQL (107 aa)). Composition is skewed to low complexity over residues 11 to 21 (RMEATAAAAAA) and 29 to 57 (NPDG…NAGE).

It belongs to the cyclin family. Cyclin F subfamily.

This is Putative cyclin-F3-2 (CYCF3-2) from Oryza sativa subsp. japonica (Rice).